Reading from the N-terminus, the 1811-residue chain is MHLYNEWLPPPVAEETKKEKESFARVVRCVKELHRPDDPESVYATLKWISVIELFVRAKSELSVEDVSELVEIGLQIFHSSENKLYAQVRWGNVLVRLINKFRKKLSLKVQWRPLYDTLIHAHFSRSPGPEGWRLRQRHFMAVTSLIRSCRRFFPQGAASEIWSEFMSLLENPWHNSSFEGSGFVRLFLPTNPENQDFFSEKWIKNVLELWDSIPNCQFWNSQWTSVLARVIKNCSFIDWESYLPMLFSRFLNMFEVPVANGSGSYPFSVDVPRNTRFLFSNRTTTPSKSIAQSIVYFLKPGSSAHEQLEKLVNLLEQYYHPSNGGRWTYSLERFLLHLVIAFQKRLQREQQDPDSLPATCLGKPERVAFVGVVLKLIDRGQYSKNEHLSETVAAATSMLSYVEPSLVLPFVASRFHLALETTTATHQLKTAMMSVAFAGRSILQSSMSTAKSQDLGGDVDDRMFLDLIGISLSNALLGMDANDPPKTLATMQLIGSIFSNMAVLDDSSDDLSFMTMASFSEWLDEFLCRLIALLQHLEPNSVINEGLSSSATSGTFLVEDGPYYYCMLEILLGRLSGSLYNQALKKISKFVQTNILPGAIAEVGLLCCACVHSTPEEAVAQIVEPMLLAVISSLKEIPVNGYGGKGSAETLVSNKQDKQTLSPALEAAIDYQLKVLSVAITYGGSSLLPYKGLLIEAISSAFNSSSWKVNGAGDHLLRSLLGSLILYYPIDQYKCLSRHPAAPALEEWISTKASSKDEQVAHSRWHVPTQEETQFANELLDLHLQSALDDLLSICQSNIHSDAGDEKTHLKVTLLRIDSTLQGVLSCLPDFRPSPRHDMVEDLQFFIAGASGSCVGSAEIREKTAITIHAACKYLLEKKSDDSILLILIIRIMDALGNYGSLEYDEWSNHRQAWKLESAAIVEPPANFITEFNSKGKRRPRWALIDKAYMHNTWRSSQSSYHLFRTDGNFSPPEPLTFLVDDLLTLCLHNYETVRVLAGKSLIKLLKRWPQLLSKCVLSLTENLRKPDVQEYVVLGSCAILSSHSVLKHLTTDPKSFSSFLLGILSSSHHESMKSQKAIIELFVKYNIHFAGLSRNILRSLESHVEGSTSGDLVSQIGSMSFDSSSLHWRYNLMANRVLLLLVMSSRIDPSFSLKILDETAGHFLKNLKSQLPQTRILAISALNILLKESPHKMQGKDQPSVSSQETENANSSLDLALSQIFREEGFFKETFESLSHIHITDTDSSSRGNHGSSSFQSMADKSITRFYFEFSASWPRTPSWISLLGSDIFYPSFARIFKRLAQECGVPVLLALKSPLEEFCNAKERPKQCVAAEALAGVLHSDVNGLFNEWDSWIMVQLQNVILGQSVESIPEWAACIRYAVTGKGKQGTKIPVMRQQILDCIVAPLPPTATTTVVAKRYAFLSAALIELSPPKMPVTEVKLHIVLLDELICNMSHSSAQIREAIGVILSVLCSNIRLRMSYQQEYPTEEGKTDVDSQLKEENWFKLISAKASEAVKNIQQASISDSLDTSTDVDMGNAQSNGDSLDDVKWMETLFHFIISSFKSGRASYLLDVIAGFLYPVMSLQETSHKDLSILAKAAFELLKWRVFPESHLQKVIGVILSSADDSNWRIRSSTLTYLRTFMYRHTFILTHEDKQKIWKTVEKLLVDSQVEVREHAAAVLAGLMKGGDEDFAADFRDRSYAEANSIQKRRNRRKSSSTQSIAGVHGAVLGLVASVLSVPYDMPSWLPEHVTLLARFAGEPTPIKSTVTKAVAEFRRTHADTWNIQKDSFTEDQLEILADTSSSSSYFA.

6 HEAT repeats span residues 563 to 599 (PYYY…ILPG), 1156 to 1193 (KILD…ESPH), 1442 to 1479 (KLHI…NIRL), 1613 to 1650 (SHLQ…RHTF), 1655 to 1692 (EDKQ…GGDE), and 1746 to 1783 (PSWL…THAD). A bromodomain-like (BRDL) region spans residues 1626–1711 (ADDSNWRIRS…SYAEANSIQK (86 aa)).

The protein belongs to the BLM10 family. Interacts with the 26S proteasomes.

Functionally, associated component of the proteasome that specifically recognizes acetylated histones and promotes ATP- and ubiquitin-independent degradation of core histones during DNA damage response. Recognizes and binds acetylated histones via its bromodomain-like (BRDL) region and activates the proteasome by opening the gated channel for substrate entry. Binds to the core proteasome via its C-terminus, which occupies the same binding sites as the proteasomal ATPases, opening the closed structure of the proteasome via an active gating mechanism. involved in DNA damage response: binds to acetylated histones and promotes degradation of histones. This is Proteasome activator subunit 4 (PA200) from Arabidopsis thaliana (Mouse-ear cress).